An 862-amino-acid chain; its full sequence is DNA mismatch repair protein MutS (862 aa).

Glycine 608–serine 615 lines the ATP pocket.

The protein belongs to the DNA mismatch repair MutS family.

Its function is as follows. This protein is involved in the repair of mismatches in DNA. It is possible that it carries out the mismatch recognition step. This protein has a weak ATPase activity. The polypeptide is DNA mismatch repair protein MutS (Bacteroides thetaiotaomicron (strain ATCC 29148 / DSM 2079 / JCM 5827 / CCUG 10774 / NCTC 10582 / VPI-5482 / E50)).